A 311-amino-acid chain; its full sequence is Protoheme IX farnesyltransferase (311 aa).

The next 8 helical transmembrane spans lie at 19-39, 55-75, 101-121, 123-143, 169-189, 221-241, 242-262, and 290-310; these read VLAY…VATI, ILAT…LNCV, NAFV…WWQA, LLSG…YTLG, AVTG…FFWT, VTKQ…ALVP, ATGV…LLMA, and VVFC…GSFF.

Belongs to the UbiA prenyltransferase family. Protoheme IX farnesyltransferase subfamily.

The protein localises to the cell membrane. It catalyses the reaction heme b + (2E,6E)-farnesyl diphosphate + H2O = Fe(II)-heme o + diphosphate. It functions in the pathway porphyrin-containing compound metabolism; heme O biosynthesis; heme O from protoheme: step 1/1. In terms of biological role, converts heme B (protoheme IX) to heme O by substitution of the vinyl group on carbon 2 of heme B porphyrin ring with a hydroxyethyl farnesyl side group. The sequence is that of Protoheme IX farnesyltransferase from Nocardia farcinica (strain IFM 10152).